The following is a 172-amino-acid chain: Large ribosomal subunit protein uL10 (172 aa).

Belongs to the universal ribosomal protein uL10 family. Part of the ribosomal stalk of the 50S ribosomal subunit. The N-terminus interacts with L11 and the large rRNA to form the base of the stalk. The C-terminus forms an elongated spine to which L12 dimers bind in a sequential fashion forming a multimeric L10(L12)X complex.

Forms part of the ribosomal stalk, playing a central role in the interaction of the ribosome with GTP-bound translation factors. In Liberibacter africanus (Citrus greening disease), this protein is Large ribosomal subunit protein uL10 (rplJ).